The primary structure comprises 559 residues: Terpene synthase 1 (559 aa).

The Mg(2+) site is built by aspartate 312, aspartate 316, aspartate 456, and glutamate 464. The DDXXD motif motif lies at 312-316 (DDLYD).

Belongs to the terpene synthase family. Tpsa subfamily. The cofactor is Mg(2+). It depends on Mn(2+) as a cofactor. In terms of tissue distribution, mostly expressed in stems and, to a lower extent, in leaves, roots and fruits.

It catalyses the reaction (2E,6E)-farnesyl diphosphate = (-)-(E)-beta-caryophyllene + diphosphate. It carries out the reaction (2E,6E)-farnesyl diphosphate = alpha-humulene + diphosphate. It functions in the pathway secondary metabolite biosynthesis; terpenoid biosynthesis. Sesquiterpene synthase involved in the biosynthesis of volatile compounds that contribute to the characteristic flavors of black pepper. Mediates the conversion of (2E,6E)-farnesyl diphosphate (FPP) into beta-caryophyllene and, as a minor compound, into alpha-humulene. The chain is Terpene synthase 1 from Piper nigrum (Black pepper).